A 441-amino-acid chain; its full sequence is Proline--tRNA ligase (441 aa).

This sequence belongs to the class-II aminoacyl-tRNA synthetase family. ProS type 2 subfamily. Homodimer.

It localises to the cytoplasm. The catalysed reaction is tRNA(Pro) + L-proline + ATP = L-prolyl-tRNA(Pro) + AMP + diphosphate. Its function is as follows. Catalyzes the attachment of proline to tRNA(Pro) in a two-step reaction: proline is first activated by ATP to form Pro-AMP and then transferred to the acceptor end of tRNA(Pro). The chain is Proline--tRNA ligase from Methylorubrum extorquens (strain PA1) (Methylobacterium extorquens).